The chain runs to 422 residues: L-cysteine:1D-myo-inositol 2-amino-2-deoxy-alpha-D-glucopyranoside ligase (422 aa).

A Zn(2+)-binding site is contributed by Cys43. Residues 43 to 46, Thr58, and 81 to 83 contribute to the L-cysteinyl-5'-AMP site; these read CGIT and NVT. The 'HIGH' region signature appears at 45 to 55; the sequence is ITPYDATHLGH. Basic and acidic residues predominate over residues 185-200; the sequence is AERGGDPDRPGKRNRL. A disordered region spans residues 185–221; the sequence is AERGGDPDRPGKRNRLDPMLWRGRRPGEPSWPGPRGV. A 'ERGGDP' region motif is present at residues 186 to 191; the sequence is ERGGDP. Residue Trp227 coordinates L-cysteinyl-5'-AMP. Cys231 provides a ligand contact to Zn(2+). 249–251 contacts L-cysteinyl-5'-AMP; sequence GSD. A Zn(2+)-binding site is contributed by His256. L-cysteinyl-5'-AMP is bound at residue Ile288. Residues 294–298 carry the 'KMSKS' region motif; it reads KMSKS.

This sequence belongs to the class-I aminoacyl-tRNA synthetase family. MshC subfamily. As to quaternary structure, monomer. Zn(2+) is required as a cofactor.

The catalysed reaction is 1D-myo-inositol 2-amino-2-deoxy-alpha-D-glucopyranoside + L-cysteine + ATP = 1D-myo-inositol 2-(L-cysteinylamino)-2-deoxy-alpha-D-glucopyranoside + AMP + diphosphate + H(+). Functionally, catalyzes the ATP-dependent condensation of GlcN-Ins and L-cysteine to form L-Cys-GlcN-Ins. This is L-cysteine:1D-myo-inositol 2-amino-2-deoxy-alpha-D-glucopyranoside ligase from Geodermatophilus obscurus (strain ATCC 25078 / DSM 43160 / JCM 3152 / CCUG 61914 / KCC A-0152 / KCTC 9177 / NBRC 13315 / NRRL B-3577 / G-20).